The sequence spans 356 residues: GDSL esterase/lipase At5g37690 (356 aa).

The signal sequence occupies residues 1–18 (MMILRLALAIVISTYATA). S34 (nucleophile) is an active-site residue. N116 and N291 each carry an N-linked (GlcNAc...) asparagine glycan. Active-site residues include D322 and H325.

It belongs to the 'GDSL' lipolytic enzyme family.

The protein localises to the secreted. The sequence is that of GDSL esterase/lipase At5g37690 from Arabidopsis thaliana (Mouse-ear cress).